Consider the following 137-residue polypeptide: DNA-binding protein H-NS (137 aa).

The stretch at 13-65 (TLRAQARECTLETLEEMLEKLEVVVNERREEESAAAAEVEERTRKLQQYREML) forms a coiled coil. A DNA-binding region spans residues 112–117 (QGRTPA).

Belongs to the histone-like protein H-NS family. Homodimer that oligomerizes on DNA into higher-order complexes that form bridges between disparate regions of DNA compacting it. Interacts with Hha, YdgT and StpA.

Its subcellular location is the cytoplasm. The protein resides in the nucleoid. Its function is as follows. A DNA-binding protein implicated in transcriptional repression and chromosome organization and compaction. Binds AT-rich DNA, repressing its transcription; about 754/4438 tested genes (15%) bind to H-NS, 70% of these are AT-rich and correspond to horizontally transferred geness (HTG), thus playing a central role in silencing foreign genes. This offers the selective advantage of silencing foreign DNA. Binds nucleation sites in AT-rich DNA and bridges them, forming higher-order nucleoprotein complexes and condensing the chromosome. A subset of genes are repressed by H-NS in association with Hha and/or YdgT. The polypeptide is DNA-binding protein H-NS (hns) (Salmonella typhimurium (strain 14028s / SGSC 2262)).